A 36-amino-acid polypeptide reads, in one-letter code: Potassium channel toxin alpha-KTx 2.7 (36 aa).

3 disulfide bridges follow: Cys7–Cys29, Cys13–Cys34, and Cys17–Cys36.

This sequence belongs to the short scorpion toxin superfamily. Potassium channel inhibitor family. Alpha-KTx 02 subfamily. In terms of tissue distribution, expressed by the venom gland.

It is found in the secreted. Its function is as follows. Inhibitor of voltage-gated potassium channels (Kv). This protein is capable of displacing the binding of radio-labeled noxiustoxin (AC P08815) to rat brain synaptosomes with high affinity (about 100 pM). It is also capable of inhibiting transient potassium-currents (resembling I(A)-type currents), in cultured rat cerebellar granule cells. About 50% of the peak currents are reduced by application of a 1.5 uM solution of this toxin. Is lethal to mice (when less than 100 ug are injected). This Centruroides limpidus (Mexican scorpion) protein is Potassium channel toxin alpha-KTx 2.7.